The following is a 57-amino-acid chain: Large ribosomal subunit protein bL32 (57 aa).

Belongs to the bacterial ribosomal protein bL32 family.

The chain is Large ribosomal subunit protein bL32 from Bacillus licheniformis (strain ATCC 14580 / DSM 13 / JCM 2505 / CCUG 7422 / NBRC 12200 / NCIMB 9375 / NCTC 10341 / NRRL NRS-1264 / Gibson 46).